A 162-amino-acid polypeptide reads, in one-letter code: PSMTDQQAEARAFLSEEMIAEFKAAFDMFDADGGGDISTKELGTVMRMLGQNPTKEELDAIIEEVDEDGSGTIDFEEFLVMMVRQMKEDAKGKSEEELANCFRIFDKNADGFIDIEELGEILRATGEHVTEEEIEDLMKDSDKNNDGRIDFDEFLKMMEGVQ.

EF-hand domains lie at Glu-17 to Asn-52, Pro-53 to Glu-88, Lys-93 to His-128, and Val-129 to Gln-162. Ca(2+)-binding residues include Asp-30, Asp-32, Asp-36, Glu-41, Asp-66, Asp-68, Ser-70, Thr-72, Glu-77, Asp-106, Asn-108, Asp-110, Glu-117, Asp-142, Asn-144, Asp-146, Arg-148, and Glu-153.

Belongs to the troponin C family.

Functionally, troponin is the central regulatory protein of striated muscle contraction. Tn consists of three components: Tn-I which is the inhibitor of actomyosin ATPase, Tn-T which contains the binding site for tropomyosin and Tn-C. The binding of calcium to Tn-C abolishes the inhibitory action of Tn on actin filaments. The polypeptide is Troponin C, skeletal muscle (TNNC2) (Meleagris gallopavo (Wild turkey)).